Reading from the N-terminus, the 290-residue chain is MPLLDYLASHPLAFVLCTILLGLLVGSFLNVVVHRLPKMMERNWKAEAREALGLEPEPKQATYNLVLPNSACPRCGHEIRPWENIPLVSYLALGGKCSSCKAAIGKRYPLVELATALLSGYVAWHFGFTWQAGAMLLLTWGLLAMSLIDADHQLLPDVLVLPLLWLGLIANHFGLFASLDDALFGAVFGYLSLWSVFWLFKLVTGKEGMGYGDFKLLAMLGAWGGWQILPLTILLSSLVGAILGVIMLRLRNAESGTPIPFGPYLAIAGWIALLWGDQITRTYLQFAGFK.

The chain crosses the membrane as a helical span at residues 13–33 (AFVLCTILLGLLVGSFLNVVV). Zn(2+)-binding residues include Cys-72, Cys-75, Cys-97, and Cys-100. A run of 5 helical transmembrane segments spans residues 128–148 (FTWQAGAMLLLTWGLLAMSLI), 158–178 (VLVLPLLWLGLIANHFGLFAS), 183–203 (LFGAVFGYLSLWSVFWLFKLV), 228–248 (ILPLTILLSSLVGAILGVIML), and 261–276 (FGPYLAIAGWIALLWG).

Belongs to the peptidase A24 family. It depends on Zn(2+) as a cofactor.

The protein localises to the cell inner membrane. It carries out the reaction Typically cleaves a -Gly-|-Phe- bond to release an N-terminal, basic peptide of 5-8 residues from type IV prepilin, and then N-methylates the new N-terminal amino group, the methyl donor being S-adenosyl-L-methionine.. Its function is as follows. Plays an essential role in type IV pili and type II pseudopili formation by proteolytically removing the leader sequence from substrate proteins and subsequently monomethylating the alpha-amino group of the newly exposed N-terminal phenylalanine. Substrates include proteins required for pilus biogenesis PilE, PilV, PilW, and PilX as well as some components of the type II general secretory apparatus GspG, GspH, GspI and GspJ. The polypeptide is Prepilin leader peptidase/N-methyltransferase (pilD) (Pseudomonas aeruginosa (strain ATCC 15692 / DSM 22644 / CIP 104116 / JCM 14847 / LMG 12228 / 1C / PRS 101 / PAO1)).